Consider the following 817-residue polypeptide: Protein kintoun (817 aa).

4 disordered regions span residues 233 to 259 (AEST…PRCS), 385 to 404 (AGAR…RKSC), 410 to 445 (AGTA…TPEN), and 473 to 503 (VQTS…KPLC). Over residues 386–401 (GAREESADSSGADHGR) the composition is skewed to basic and acidic residues. Phosphoserine occurs at positions 622 and 631. A disordered region spans residues 653 to 692 (ECSDPDGLQGKEKGVKEECPLSEKENTEHSTTSTADSNSS). Positions 661 to 680 (QGKEKGVKEECPLSEKENTE) are enriched in basic and acidic residues. The span at 681-692 (HSTTSTADSNSS) shows a compositional bias: polar residues.

The protein belongs to the PIH1 family. Kintoun subfamily. Interacts with CFAP300. Interacts with DNAI2 and HSPA1A. Interacts with DNAAF4. Interacts with DNAAF6/PIH1D3.

Its subcellular location is the cytoplasm. The protein resides in the dynein axonemal particle. Functionally, required for cytoplasmic pre-assembly of axonemal dyneins, thereby playing a central role in motility in cilia and flagella. Involved in pre-assembly of dynein arm complexes in the cytoplasm before intraflagellar transport loads them for the ciliary compartment. This Rattus norvegicus (Rat) protein is Protein kintoun.